Here is a 473-residue protein sequence, read N- to C-terminus: Mitochondrial adenyl nucleotide antiporter SLC25A24-B (473 aa).

The segment at 1 to 173 (MLEQVQKFLL…RYWKHSTVLD (173 aa)) is regulatory N-terminal domain. The Mitochondrial intermembrane portion of the chain corresponds to 1 to 197 (MLEQVQKFLL…EKKTGQWWKQ (197 aa)). EF-hand domains are found at residues 19–54 (DSQSRYEELFHKLDVNKDGKVDILELQEGLKAMGME), 55–88 (VGKGAEEKIVAAGDTNKDGHLDFGEFIRYLEEHE), 86–121 (EHEKKMKIAFTSLDKNKDGKIESAEIMNSLKVLGIK), and 122–157 (ISLDHADKILKSMDSDGTLTVDWNEWRDHFLFNPAD). Ca(2+)-binding residues include D32, N34, D36, K38, E43, D68, N70, D72, H74, E79, D99, N101, D103, K105, E110, D135, D137, T139, T141, and E146. Residues 159–168 (IQQIIRYWKH) are linker region. The C-terminal transmembrane transporter domain stretch occupies residues 174 to 473 (IGDSLTIPDE…YEKMKVQLGI (300 aa)). 3 Solcar repeats span residues 192–277 (GQWW…YKKL), 285–370 (LGTA…LKNY), and 382–470 (PGVL…MKVQ). A helical membrane pass occupies residues 198–215 (LMAGGMAGAVSRTGTAPL). Topologically, residues 216–251 (DRLKVMMQVHGSKGNSNIITGLKQMVKEGGIRSLWR) are mitochondrial matrix. A helical membrane pass occupies residues 252–271 (GNGVNVIKIAPETAMKFWAY). Residues 272–294 (EQYKKLFTSESGKLGTAERFVAG) are Mitochondrial intermembrane-facing. A helical transmembrane segment spans residues 295-308 (SLAGATAQTSIYPM). Over 309–344 (EVLKTRLAVGRTGQYSGMFDCAKKIMQKEGIRAFYK) the chain is Mitochondrial matrix. A helical membrane pass occupies residues 345-364 (GYIPNILGIIPYAGIDLAIY). Residues 365 to 387 (ETLKNYWLQNHAKDSANPGVLVL) are Mitochondrial intermembrane-facing. A helical transmembrane segment spans residues 388–405 (LGCGTASSTCGQLASYPL). The Mitochondrial matrix portion of the chain corresponds to 406–444 (ALIRTRMQAQASIEGAPQLNMGGLFRKIVAKEGFLGLYR). The helical transmembrane segment at 445–464 (GIGPNFLKVLPAVSISYVVY) threads the bilayer. Residues 465-473 (EKMKVQLGI) lie on the Mitochondrial intermembrane side of the membrane.

Belongs to the mitochondrial carrier (TC 2.A.29) family. Monomer.

It is found in the mitochondrion inner membrane. It carries out the reaction Mg(2+)(out) + phosphate(in) + ATP(out) = Mg(2+)(in) + phosphate(out) + ATP(in). The catalysed reaction is ADP(out) + phosphate(in) + H(+)(out) = ADP(in) + phosphate(out) + H(+)(in). The enzyme catalyses AMP(out) + phosphate(in) = AMP(in) + phosphate(out). It catalyses the reaction phosphate(in) + ATP(out) + 2 H(+)(out) = phosphate(out) + ATP(in) + 2 H(+)(in). It carries out the reaction dADP(in) + ADP(out) = dADP(out) + ADP(in). The catalysed reaction is Mg(2+)(in) + ADP(out) + ATP(in) + H(+)(out) = Mg(2+)(out) + ADP(in) + ATP(out) + H(+)(in). The enzyme catalyses ADP(out) + diphosphate(in) = ADP(in) + diphosphate(out). It catalyses the reaction dAMP(in) + ADP(out) + H(+)(out) = dAMP(out) + ADP(in) + H(+)(in). It carries out the reaction 3'-AMP(in) + ADP(out) + H(+)(out) = 3'-AMP(out) + ADP(in) + H(+)(in). The catalysed reaction is dAMP(out) + phosphate(in) = dAMP(in) + phosphate(out). The enzyme catalyses 3'-AMP(out) + phosphate(in) = 3'-AMP(in) + phosphate(out). It catalyses the reaction dADP(out) + phosphate(in) + H(+)(out) = dADP(in) + phosphate(out) + H(+)(in). Its activity is regulated as follows. Activated by an increase in cytosolic calcium levels that induce a conformational change of the N-terminal regulatory domain, uncapping the channel and allowing transport. Inhibited by bathophenanthroline, mersalyl, p-hydroxymercuribenzoate, bromcresol purple and tannic acid. In terms of biological role, electroneutral antiporter that mediates the transport of adenyl nucleotides through the inner mitochondrial membrane. Originally identified as an ATP-magnesium/inorganic phosphate antiporter, it also acts as a broad specificity adenyl nucleotide antiporter. By regulating the mitochondrial matrix adenyl nucleotide pool could adapt to changing cellular energetic demands and indirectly regulate adenyl nucleotide-dependent metabolic pathways. The polypeptide is Mitochondrial adenyl nucleotide antiporter SLC25A24-B (slc25a24-b) (Xenopus laevis (African clawed frog)).